The primary structure comprises 504 residues: Maturase K (504 aa).

Belongs to the intron maturase 2 family. MatK subfamily.

It is found in the plastid. The protein localises to the chloroplast. Usually encoded in the trnK tRNA gene intron. Probably assists in splicing its own and other chloroplast group II introns. In Hamamelis mollis (Chinese witch hazel), this protein is Maturase K.